A 247-amino-acid polypeptide reads, in one-letter code: Translation initiation factor IF-3 (247 aa).

Disordered regions lie at residues 1–20 (MIREQRSSRGGSRDQRTNRR) and 188–247 (LVRQ…PTAS). Positions 182–247 (AQKARELVRQ…AAEAQSPTAS (66 aa)) are needed for vegetative and developmental functions, but not for viability. Over residues 207 to 217 (AGKSAAGASSG) the composition is skewed to low complexity. A compositionally biased stretch (basic and acidic residues) spans 218-232 (AEEKAEETAEEKKEA). Residues 233-247 (QAAPAAAEAQSPTAS) show a composition bias toward low complexity.

Belongs to the IF-3 family. In terms of assembly, monomer.

Its subcellular location is the cytoplasm. IF-3 binds to the 30S ribosomal subunit and shifts the equilibrium between 70S ribosomes and their 50S and 30S subunits in favor of the free subunits, thus enhancing the availability of 30S subunits on which protein synthesis initiation begins. This is Translation initiation factor IF-3 from Myxococcus xanthus.